The primary structure comprises 930 residues: Endoplasmic reticulum aminopeptidase 1 (930 aa).

Residues 1–2 (MP) lie on the Cytoplasmic side of the membrane. The chain crosses the membrane as a helical; Signal-anchor for type II membrane protein span at residues 3-23 (SLLPLVLTFLSVSSPSWCQNS). Topologically, residues 24–930 (DIESLKASNG…WLQKEKPELL (907 aa)) are lumenal. N-linked (GlcNAc...) asparagine glycosylation is found at Asn59 and Asn143. Substrate-binding positions include Glu172 and 306-310 (GAMEN). His342 is a binding site for Zn(2+). Residue Glu343 is part of the active site. Zn(2+) is bound by residues His346 and Glu365. Residues Cys393 and Cys432 are joined by a disulfide bond. N-linked (GlcNAc...) asparagine glycosylation is found at Asn403 and Asn655. An intrachain disulfide couples Cys725 to Cys732. Asn749 and Asn890 each carry an N-linked (GlcNAc...) asparagine glycan.

Belongs to the peptidase M1 family. Monomer. May also exist as a heterodimer; with ERAP2. Interacts with RBMX. Zn(2+) serves as cofactor. In terms of processing, N-glycosylated.

It localises to the endoplasmic reticulum membrane. Aminopeptidase that plays a central role in peptide trimming, a step required for the generation of most HLA class I-binding peptides. Peptide trimming is essential to customize longer precursor peptides to fit them to the correct length required for presentation on MHC class I molecules. Strongly prefers substrates 9-16 residues long. Rapidly degrades 13-mer to a 9-mer and then stops. Preferentially hydrolyzes the residue Leu and peptides with a hydrophobic C-terminus, while it has weak activity toward peptides with charged C-terminus. May play a role in the inactivation of peptide hormones. May be involved in the regulation of blood pressure through the inactivation of angiotensin II and/or the generation of bradykinin in the kidney. The polypeptide is Endoplasmic reticulum aminopeptidase 1 (Erap1) (Mus musculus (Mouse)).